A 164-amino-acid polypeptide reads, in one-letter code: D-aminoacyl-tRNA deacylase (164 aa).

The tRNA site is built by W72 and F89. Catalysis depends on T90, which acts as the Nucleophile. A C-terminal adenosine nucleotide of tRNA motif is present at residues H104–K107. The Gly-cisPro motif, allows the protein to recognize chirality of D-amino acids signature appears at G149 to P150.

Belongs to the DTD family. As to quaternary structure, homodimer.

The protein localises to the cytoplasm. The enzyme catalyses glycyl-tRNA(Ala) + H2O = tRNA(Ala) + glycine + H(+). The catalysed reaction is a D-aminoacyl-tRNA + H2O = a tRNA + a D-alpha-amino acid + H(+). It catalyses the reaction D-tyrosyl-tRNA(Tyr) + H2O = D-tyrosine + tRNA(Tyr). Functionally, D-aminoacyl-tRNA deacylase, with no observable activity on tRNAs charged with their cognate L-amino acid. Probably acts by rejecting L-amino acids from its binding site rather than specific recognition of D-amino acids. Catalyzes the hydrolysis of D-tyrosyl-tRNA(Tyr), has no activity on correctly charged L-tyrosyl-tRNA(Tyr). Hydrolyzes correctly charged, achiral, glycyl-tRNA(Gly). Deacylates mischarged D.melanogaster and E.coli glycyl-tRNA(Ala). Probably acts via tRNA-based rather than protein-based catalysis. Acts on tRNAs only when the D-amino acid is either attached to the ribose 3'-OH or transferred to the 3'-OH from the 2'-OH through rapid transesterification. Binds a number of other D-amino acids (D-Arg, D-Glu, D-His, D-Lys, D-Ser), suggesting it may also deacylate other mischarged tRNAs. This chain is D-aminoacyl-tRNA deacylase, found in Plasmodium falciparum (isolate 3D7).